The following is a 406-amino-acid chain: Argininosuccinate synthase (406 aa).

9-17 is a binding site for ATP; sequence AYSGGLDTS. Tyrosine 86 is an L-citrulline binding site. Glycine 116 contributes to the ATP binding site. L-aspartate is bound by residues threonine 118, asparagine 122, and aspartate 123. L-citrulline is bound at residue asparagine 122. L-citrulline is bound by residues arginine 126, serine 174, serine 183, glutamate 259, and tyrosine 271.

The protein belongs to the argininosuccinate synthase family. Type 1 subfamily. In terms of assembly, homotetramer.

It is found in the cytoplasm. The enzyme catalyses L-citrulline + L-aspartate + ATP = 2-(N(omega)-L-arginino)succinate + AMP + diphosphate + H(+). The protein operates within amino-acid biosynthesis; L-arginine biosynthesis; L-arginine from L-ornithine and carbamoyl phosphate: step 2/3. The polypeptide is Argininosuccinate synthase (Geobacillus thermodenitrificans (strain NG80-2)).